The primary structure comprises 328 residues: 4-hydroxythreonine-4-phosphate dehydrogenase (328 aa).

Residues His-134 and Thr-135 each contribute to the substrate site. A divalent metal cation-binding residues include His-164, His-209, and His-264. Positions 272, 281, and 290 each coordinate substrate.

The protein belongs to the PdxA family. As to quaternary structure, homodimer. Zn(2+) serves as cofactor. Mg(2+) is required as a cofactor. It depends on Co(2+) as a cofactor.

It is found in the cytoplasm. It catalyses the reaction 4-(phosphooxy)-L-threonine + NAD(+) = 3-amino-2-oxopropyl phosphate + CO2 + NADH. It participates in cofactor biosynthesis; pyridoxine 5'-phosphate biosynthesis; pyridoxine 5'-phosphate from D-erythrose 4-phosphate: step 4/5. Functionally, catalyzes the NAD(P)-dependent oxidation of 4-(phosphooxy)-L-threonine (HTP) into 2-amino-3-oxo-4-(phosphooxy)butyric acid which spontaneously decarboxylates to form 3-amino-2-oxopropyl phosphate (AHAP). This chain is 4-hydroxythreonine-4-phosphate dehydrogenase, found in Shewanella denitrificans (strain OS217 / ATCC BAA-1090 / DSM 15013).